The following is a 394-amino-acid chain: NADH dehydrogenase [ubiquinone] iron-sulfur protein 2 (394 aa).

The span at M1 to G16 shows a compositional bias: polar residues. Residues M1 to A22 are disordered.

This sequence belongs to the complex I 49 kDa subunit family. Complex I is composed of about 45 different subunits. This is a component of the iron-sulfur (IP) fragment of the enzyme.

Its subcellular location is the mitochondrion. The enzyme catalyses a ubiquinone + NADH + 5 H(+)(in) = a ubiquinol + NAD(+) + 4 H(+)(out). Its function is as follows. Core subunit of the mitochondrial membrane respiratory chain NADH dehydrogenase (Complex I) that is believed to belong to the minimal assembly required for catalysis. Complex I functions in the transfer of electrons from NADH to the respiratory chain. The immediate electron acceptor for the enzyme is believed to be ubiquinone. Component of the iron-sulfur (IP) fragment of the enzyme. This is NADH dehydrogenase [ubiquinone] iron-sulfur protein 2 (NAD7) from Nicotiana sylvestris (Wood tobacco).